Here is a 699-residue protein sequence, read N- to C-terminus: Pollen-specific leucine-rich repeat extensin-like protein 4 (699 aa).

The first 39 residues, 1-39, serve as a signal peptide directing secretion; it reads MPFYKQPWVFSKVFVLAMAKPPSFGCCFFLLFFSFLSSS. Asparagine 106 is a glycosylation site (N-linked (GlcNAc...) asparagine). LRR repeat units lie at residues 133-157, 158-180, 182-205, 206-229, 231-251, 253-275, 276-299, 301-323, and 324-347; these read VTVV…LGLM, TDVA…SFEK, KLMH…VLSW, PDVK…LFKK, LDAI…SLGE, PASV…IGNM, KNLN…IGKL, NVTV…FVGL, and TSVE…ICQL. Asparagine 301 carries N-linked (GlcNAc...) asparagine glycosylation. Asparagine 352 carries an N-linked (GlcNAc...) asparagine glycan. Positions 411 to 699 are disordered; sequence KCAGGSSTPS…SPPPPMFAGY (289 aa). Pro residues-rich tracts occupy residues 421–466, 482–504, 518–659, and 690–699; these read KPSP…PVPT, KPSP…PQPD, PPPA…PPAP, and SPPPPMFAGY. The tract at residues 517-699 is contains the Ser-Pro(4) repeats; sequence SPPPAPVNSP…SPPPPMFAGY (183 aa).

Hydroxylated on proline residues in the S-P-P-P-P repeat. In terms of processing, O-glycosylated on hydroxyprolines. As to expression, expressed in flowers, stamen, pollen, and pollinated carpels.

Its subcellular location is the secreted. It localises to the cell wall. In terms of biological role, modulates cell morphogenesis by regulating cell wall formation and assembly, and/or growth polarization. This chain is Pollen-specific leucine-rich repeat extensin-like protein 4 (PEX4), found in Arabidopsis thaliana (Mouse-ear cress).